A 213-amino-acid polypeptide reads, in one-letter code: Imidazole glycerol phosphate synthase subunit HisH 1 (213 aa).

Residues 3–213 (SVSILDYGVG…LSIIQQFLQI (211 aa)) enclose the Glutamine amidotransferase type-1 domain. The active-site Nucleophile is Cys-81. Active-site residues include His-195 and Glu-197.

As to quaternary structure, heterodimer of HisH and HisF.

The protein localises to the cytoplasm. The enzyme catalyses 5-[(5-phospho-1-deoxy-D-ribulos-1-ylimino)methylamino]-1-(5-phospho-beta-D-ribosyl)imidazole-4-carboxamide + L-glutamine = D-erythro-1-(imidazol-4-yl)glycerol 3-phosphate + 5-amino-1-(5-phospho-beta-D-ribosyl)imidazole-4-carboxamide + L-glutamate + H(+). It catalyses the reaction L-glutamine + H2O = L-glutamate + NH4(+). It functions in the pathway amino-acid biosynthesis; L-histidine biosynthesis; L-histidine from 5-phospho-alpha-D-ribose 1-diphosphate: step 5/9. In terms of biological role, IGPS catalyzes the conversion of PRFAR and glutamine to IGP, AICAR and glutamate. The HisH subunit provides the glutamine amidotransferase activity that produces the ammonia necessary to HisF for the synthesis of IGP and AICAR. The sequence is that of Imidazole glycerol phosphate synthase subunit HisH 1 from Legionella pneumophila (strain Lens).